The chain runs to 1755 residues: MESQQLSQHSPISHGSACASVTSKEVHTNQDPLDVSASKIQEYDKASTKANSQQTTTPASSAVPENPHHASPQTAQSHSPQNGPYQQQCMMTQNQANPSGWSFYGRPSMIPYTPYQMSPMYFPPGPHSQFPQYPSSVGTPLSTPSPESGNTFTDSSSADSDMTSTKKYVRPPPMLTSPNDFLNWVKTYIKFLQNSNLGDIIPTATRKAVRQMTDDELTFLCHTFQLFAPSQFLPTWVKDILSADYTDIMKILSKSINKMQSDTQEVNDITTLATLHYNGSTPADAFEAEVTNILDRLNNNGIPINNKVACQFIMRGLSGEYKFLRYARHRYIHMTVADLFSDIHSMYEEQQESKRNKSTYRRNPSDEKKDSRTYTNTTKPKSITRNSQKPNNSQSRTARAHNVSTSNNSSGPDNDLIRGSTTEPIQLKNKHDLHLGQELTESTVNHTNHSDDELPGHLLLDSGASRTLIRSAHHIHSASSNPGINVVDAQKRNIPINAIGDLQFHFQDNTKTSIKVLHTPNIAYDLLSLNELAAVDITACFTKNVLERSDGTVLAPIVKYGDFYWVSKKYLLPSNISVPTINNVHTSESTRKYPYPFIHRMLAHANAQTIRYSLKNNTITYFNESDVDWSSAIDYQCPDCLIGKSTKHRHIKGSRLKYQNSYEPFQYLHTDIFGPVHNLPKSAPSYFISFTDETTKFRWVYPLHDRREDSILDVFTTILAFIKNQFQASVLVIQMDRGSEYTNRTLHKFLEKNGITPCYTTTADSRAHGVAERLNRTLLDDCRTQLQCSGLPNHLWFSAIEFSTIVRNSLASPKSKKSARQHAGLAGLDISTLLPFGQPVIVNDHNPNSKIHPRGIPGYALHPSRNSYGYIIYLPSLKKTVDTTNYVILQGKESRLDQFNYDALTFDEDLNRLTASYQSFIASNEIQQSDDLNIESDHDFQSDIELHPEQPRNVLSKAVSPTDSTPPSTHTEDSKRVSKTNIRAPREVDPNISKSNILPSKKRSSTPQISDIESTGSGGMHRLDVPLLAPMSQYNTHESSHTSKSKDFRHSDSYSDNETNHTNVPISSTGGTNNKTVPQTSEQETEKRIIHRSPSIDTSSSESNSLHHVVPIKTSDTCPKENTEESIIADLPLPDLPPEPPTKLSDSFKELPPINSRQTNSSLGGIGDSNAYTTINSKKRSLEDNETEIKVSRDTWNTKNMRSLEPPRSKKRIHLIAAVKAVKSIKPIRTTLRYDEAITYNKDIKEKEKYIEAYHKEVNQLLKMKTWDTDRYYDRKEIDPKRVINSMFIFNRKRDGTHKARFVARGDIQHPDTYDSGMQSNTVHHYALMTSLSLALDNNYYITQLDISSAYLYADIKEELYIRPPPHLGMNDKLIRLKKSLYGLKQSGANWYETIKSYLIQQCGMEEVRGWSCVFKNSQVTICLFVDDMVLFSKNLNSNKRIIEKLKMQYDTKIINLGESDEEIQYDILGLEIKYQRGKYMKLGMENSLTEKIPKLNVPLNPKGRKLSAPGQPGLYIDQQELELEEDDYKMKVHEMQKLIGLASYVGYKFRFDLLYYINTLAQHILFPSKQVLDMTYELIQFIWNTRDKQLIWHKSKPVKPTNKLVVISDASYGNQPYYKSQIGNIYLLNGKVIGGKSTKASLTCTSTTEAEIHAISESVPLLNNLSYLIQELDKKPITKGLLTDSKSTISIIISNNEEKFRNRFFGTKAMRLRDEVSGNHLHVCYIETKKNIADVMTKPLPIKTFKLLTNKWIH.

Polar residues-rich tracts occupy residues 1-23 (MESQ…SVTS), 48-60 (TKAN…TPAS), 71-86 (SPQT…GPYQ), and 131-152 (PQYP…GNTF). Disordered stretches follow at residues 1 to 86 (MESQ…GPYQ), 131 to 171 (PQYP…YVRP), and 350 to 420 (QQES…IRGS). Residues 153–165 (TDSSSADSDMTST) show a composition bias toward low complexity. An RNA-binding region spans residues 299–401 (NNGIPINNKV…NSQSRTARAH (103 aa)). Basic and acidic residues predominate over residues 363–372 (NPSDEKKDSR). Over residues 373 to 412 (TYTNTTKPKSITRNSQKPNNSQSRTARAHNVSTSNNSSGP) the composition is skewed to polar residues. Asp461 serves as the catalytic For protease activity; shared with dimeric partner. The segment at 583–640 (NVHTSESTRKYPYPFIHRMLAHANAQTIRYSLKNNTITYFNESDVDWSSAIDYQCPDC) is integrase-type zinc finger-like. Positions 660-835 (NSYEPFQYLH…AGLDISTLLP (176 aa)) constitute an Integrase catalytic domain. Positions 671 and 736 each coordinate Mg(2+). Disordered regions lie at residues 956–1120 (SKAV…TCPK) and 1146–1172 (DSFK…SNAY). Residues 960–969 (SPTDSTPPST) are compositionally biased toward low complexity. Positions 1005-1015 (STPQISDIEST) are enriched in polar residues. Residues 1038–1053 (ESSHTSKSKDFRHSDS) are compositionally biased toward basic and acidic residues. Polar residues-rich tracts occupy residues 1054-1082 (YSDN…QTSE) and 1095-1106 (SIDTSSSESNSL). The Bipartite nuclear localization signal motif lies at 1178–1212 (KKRSLEDNETEIKVSRDTWNTKNMRSLEPPRSKKR). Residues 1338–1476 (NNYYITQLDI…DILGLEIKYQ (139 aa)) form the Reverse transcriptase Ty1/copia-type domain. Residues Asp1346, Asp1427, Asp1428, Asp1610, Glu1652, and Asp1685 each coordinate Mg(2+). The RNase H Ty1/copia-type domain occupies 1610–1752 (DASYGNQPYY…IKTFKLLTNK (143 aa)).

As to quaternary structure, the capsid protein forms a homotrimer, from which the VLPs are assembled. The protease is a homodimer, whose active site consists of two apposed aspartic acid residues. In terms of processing, initially, virus-like particles (VLPs) are composed of the structural unprocessed proteins Gag and Gag-Pol, and also contain the host initiator methionine tRNA (tRNA(i)-Met) which serves as a primer for minus-strand DNA synthesis, and a dimer of genomic Ty RNA. Processing of the polyproteins occurs within the particle and proceeds by an ordered pathway, called maturation. First, the protease (PR) is released by autocatalytic cleavage of the Gag-Pol polyprotein yielding capsid protein p45 and a Pol-p154 precursor protein. This cleavage is a prerequisite for subsequent processing of Pol-p154 at the remaining sites to release the mature structural and catalytic proteins. Maturation takes place prior to the RT reaction and is required to produce transposition-competent VLPs.

Its subcellular location is the cytoplasm. It localises to the nucleus. It catalyses the reaction DNA(n) + a 2'-deoxyribonucleoside 5'-triphosphate = DNA(n+1) + diphosphate. The catalysed reaction is Endonucleolytic cleavage to 5'-phosphomonoester.. Capsid protein (CA) is the structural component of the virus-like particle (VLP), forming the shell that encapsulates the retrotransposons dimeric RNA genome. The particles are assembled from trimer-clustered units and there are holes in the capsid shells that allow for the diffusion of macromolecules. CA also has nucleocapsid-like chaperone activity, promoting primer tRNA(i)-Met annealing to the multipartite primer-binding site (PBS), dimerization of Ty1 RNA and initiation of reverse transcription. Its function is as follows. The aspartyl protease (PR) mediates the proteolytic cleavages of the Gag and Gag-Pol polyproteins after assembly of the VLP. In terms of biological role, reverse transcriptase/ribonuclease H (RT) is a multifunctional enzyme that catalyzes the conversion of the retro-elements RNA genome into dsDNA within the VLP. The enzyme displays a DNA polymerase activity that can copy either DNA or RNA templates, and a ribonuclease H (RNase H) activity that cleaves the RNA strand of RNA-DNA heteroduplexes during plus-strand synthesis and hydrolyzes RNA primers. The conversion leads to a linear dsDNA copy of the retrotransposon that includes long terminal repeats (LTRs) at both ends. Functionally, integrase (IN) targets the VLP to the nucleus, where a subparticle preintegration complex (PIC) containing at least integrase and the newly synthesized dsDNA copy of the retrotransposon must transit the nuclear membrane. Once in the nucleus, integrase performs the integration of the dsDNA into the host genome. The protein is Transposon Ty1-NL1 Gag-Pol polyprotein (TY1B-NL1) of Saccharomyces cerevisiae (strain ATCC 204508 / S288c) (Baker's yeast).